A 384-amino-acid chain; its full sequence is Viral protein 1 (384 aa).

This is Viral protein 1 from Chaetoceros setoense (Chaetoceros setoense DNA virus).